A 681-amino-acid chain; its full sequence is DNA ligase (681 aa).

Residues 44–48 (DYIYD), 94–95 (SL), and Glu-124 each bind NAD(+). Lys-126 serves as the catalytic N6-AMP-lysine intermediate. Positions 147, 181, 297, and 321 each coordinate NAD(+). The Zn(2+) site is built by Cys-415, Cys-418, Cys-433, and Cys-438. Residues 598 to 681 (DETSFFYGKK…EAQAKEGTDK (84 aa)) enclose the BRCT domain.

It belongs to the NAD-dependent DNA ligase family. LigA subfamily. Mg(2+) is required as a cofactor. Mn(2+) serves as cofactor.

The catalysed reaction is NAD(+) + (deoxyribonucleotide)n-3'-hydroxyl + 5'-phospho-(deoxyribonucleotide)m = (deoxyribonucleotide)n+m + AMP + beta-nicotinamide D-nucleotide.. Its function is as follows. DNA ligase that catalyzes the formation of phosphodiester linkages between 5'-phosphoryl and 3'-hydroxyl groups in double-stranded DNA using NAD as a coenzyme and as the energy source for the reaction. It is essential for DNA replication and repair of damaged DNA. In Leuconostoc citreum (strain KM20), this protein is DNA ligase.